The chain runs to 189 residues: uncharacterized protein (189 aa).

Helical transmembrane passes span 49–69, 78–98, 102–122, and 124–144; these read LLGILKLITFPVLCAAGLFVF, LFHKSFQGCSGYVLATFLSLF, LTIVGIVSCITWAPGFIFPMI, and VSIAFATVETCFQIYTHLFPA. Residues 165 to 189 are disordered; sequence SSSAPDLNYPSLPTQSASPSQRFSA.

The protein belongs to the chlamydial CPn_0442/CT_006/TC_0274 family.

The protein resides in the cell membrane. This is an uncharacterized protein from Chlamydia trachomatis serovar D (strain ATCC VR-885 / DSM 19411 / UW-3/Cx).